The chain runs to 709 residues: Early transcription factor 82 kDa subunit (709 aa).

It belongs to the poxviridae VETF large subunit family. In terms of assembly, heterodimer of a 70 kDa and a 82 kDa subunit. Part of the early transcription complex composed of ETF, RAP94, and the DNA-directed RNA polymerase.

It is found in the virion. Its function is as follows. Acts with RNA polymerase to initiate transcription from early gene promoters. Is recruited by the RPO-associated protein of 94 kDa (RAP94) to form the early transcription complex, which also contains the core RNA polymerase. ETF heterodimer binds to early gene promoters. The sequence is that of Early transcription factor 82 kDa subunit (VETFL) from Vertebrata (FPV).